The chain runs to 792 residues: Ribosome biogenesis protein BOP1 homolog (792 aa).

Residues 1–11 are compositionally biased toward basic residues; that stretch reads MTKKRTVKRKV. The disordered stretch occupies residues 1-167; that stretch reads MTKKRTVKRK…ESDTSDEEDI (167 aa). Composition is skewed to acidic residues over residues 44–53, 60–72, 82–117, and 157–166; these read EDTTDDEGID, SSED…DEEG, EAEE…ESDA, and EESDTSDEED. 7 WD repeats span residues 453–494, 496–534, 578–620, 623–661, 664–703, 707–746, and 762–792; these read GHTD…RTIE, NDVV…KLLI, THFK…SQIP, KSKG…LIKK, TNSK…KPYQ, LHRN…DLLQ, and RDEF…RLYT.

It belongs to the WD repeat BOP1/ERB1 family.

The protein resides in the nucleus. The protein localises to the nucleolus. It localises to the nucleoplasm. Functionally, required for maturation of ribosomal RNAs and formation of the large ribosomal subunit. This is Ribosome biogenesis protein BOP1 homolog from Drosophila mojavensis (Fruit fly).